The following is a 447-amino-acid chain: Exodeoxyribonuclease 7 large subunit (447 aa).

This sequence belongs to the XseA family. In terms of assembly, heterooligomer composed of large and small subunits.

The protein resides in the cytoplasm. The enzyme catalyses Exonucleolytic cleavage in either 5'- to 3'- or 3'- to 5'-direction to yield nucleoside 5'-phosphates.. Its function is as follows. Bidirectionally degrades single-stranded DNA into large acid-insoluble oligonucleotides, which are then degraded further into small acid-soluble oligonucleotides. This is Exodeoxyribonuclease 7 large subunit from Thioalkalivibrio sulfidiphilus (strain HL-EbGR7).